A 444-amino-acid polypeptide reads, in one-letter code: 23S rRNA (uracil(1939)-C(5))-methyltransferase RlmD (444 aa).

The region spanning 5 to 64 (KPKLNLTSQTARIVNLSHDGRGIARVNGKATFIQGALPGEVVEFQYTRVKKDFDEGKLLS) is the TRAM domain. Positions 77, 83, 86, and 166 each coordinate [4Fe-4S] cluster. S-adenosyl-L-methionine is bound by residues glutamine 276, phenylalanine 305, asparagine 310, glutamate 326, asparagine 353, and aspartate 374. Cysteine 400 serves as the catalytic Nucleophile.

This sequence belongs to the class I-like SAM-binding methyltransferase superfamily. RNA M5U methyltransferase family. RlmD subfamily.

It carries out the reaction uridine(1939) in 23S rRNA + S-adenosyl-L-methionine = 5-methyluridine(1939) in 23S rRNA + S-adenosyl-L-homocysteine + H(+). Its function is as follows. Catalyzes the formation of 5-methyl-uridine at position 1939 (m5U1939) in 23S rRNA. The chain is 23S rRNA (uracil(1939)-C(5))-methyltransferase RlmD from Legionella pneumophila (strain Paris).